The sequence spans 471 residues: Alpha-galactosidase 5 (471 aa).

The N-terminal stretch at 1–18 (MFAFYFLTACTTLKGVFG) is a signal peptide. Cys-42 and Cys-74 are disulfide-bonded. Substrate-binding residues include Asp-72 and Asp-73. Asn-105 carries N-linked (GlcNAc...) asparagine glycosylation. Cysteines 121 and 151 form a disulfide. Residue Lys-147 coordinates substrate. The Nucleophile role is filled by Asp-149. An N-linked (GlcNAc...) asparagine glycan is attached at Asn-175. Arg-205 is a substrate binding site. The active-site Proton donor is the Asp-209. 2 disulfide bridges follow: Cys-221–Cys-237 and Cys-223–Cys-230. Gln-251 contributes to the substrate binding site. N-linked (GlcNAc...) asparagine glycosylation is found at Asn-270, Asn-370, Asn-403, Asn-422, Asn-435, and Asn-454.

Belongs to the glycosyl hydrolase 27 family. As to quaternary structure, homotetramer.

The protein resides in the secreted. It catalyses the reaction Hydrolysis of terminal, non-reducing alpha-D-galactose residues in alpha-D-galactosides, including galactose oligosaccharides, galactomannans and galactolipids.. This chain is Alpha-galactosidase 5 (MEL5), found in Saccharomyces cerevisiae (Baker's yeast).